Here is a 555-residue protein sequence, read N- to C-terminus: Formate--tetrahydrofolate ligase (555 aa).

65–72 lines the ATP pocket; sequence TPAGEGKS.

The protein belongs to the formate--tetrahydrofolate ligase family.

The enzyme catalyses (6S)-5,6,7,8-tetrahydrofolate + formate + ATP = (6R)-10-formyltetrahydrofolate + ADP + phosphate. Its pathway is one-carbon metabolism; tetrahydrofolate interconversion. The protein is Formate--tetrahydrofolate ligase of Staphylococcus aureus (strain COL).